The chain runs to 61 residues: MSDKKTVKVTLVKSLIGRIESHRACARGLGLKKLNQTVEVLDTPENRGMINKISFLVKCEG.

It belongs to the universal ribosomal protein uL30 family. Part of the 50S ribosomal subunit.

In Laribacter hongkongensis (strain HLHK9), this protein is Large ribosomal subunit protein uL30.